We begin with the raw amino-acid sequence, 4194 residues long: Hybrid PKS-NRPS synthetase pydA (4194 aa).

Positions 14–450 (REPIAVVGSG…GTNAHAIVEN (437 aa)) constitute a Ketosynthase family 3 (KS3) domain. Catalysis depends on for beta-ketoacyl synthase activity residues Cys-187, His-326, and His-370. In terms of domain architecture, Malonyl-CoA:ACP transacylase (MAT) spans 565–887 (VFTGQGAQWA…QRGKDDVQAF (323 aa)). Residues 953–1088 (HPLLGTRTTD…GRVIVITGEA (136 aa)) form an N-terminal hotdog fold region. One can recognise a PKS/mFAS DH domain in the interval 953–1257 (HPLLGTRTTD…VVSFSEPTAE (305 aa)). His-985 serves as the catalytic Proton acceptor; for dehydratase activity. Residues 1103 to 1257 (LVDIPEDRFY…VVSFSEPTAE (155 aa)) form a C-terminal hotdog fold region. Asp-1163 serves as the catalytic Proton donor; for dehydratase activity. The segment at 1302–1596 (YMRQLASLFP…FSGVDSTTHE (295 aa)) is methyltransferase (cMeT) domain. The Ketoreductase (KR) domain occupies 2141–2314 (TYVFFGLTSD…AGSILHIGAV (174 aa)). Residues 2421–2505 (TTAEEALEIV…ELVEFAVENM (85 aa)) enclose the Carrier 1 domain. Ser-2465 carries the O-(pantetheine 4'-phosphoryl)serine modification. The disordered stretch occupies residues 2512–2583 (NMSDSLNAVP…ERDSSTASLE (72 aa)). Residues 2526 to 2547 (APVIPASPPSGSVSSAPSSDPP) show a composition bias toward low complexity. Positions 2550–2565 (TAETSQHLSESSSKTS) are enriched in polar residues. Residues 2566–2577 (QPDEKQSEERDS) show a composition bias toward basic and acidic residues. Residues 2591 to 3023 (EKVLPVSPGQ…QILKDVSLFT (433 aa)) form a condensation region. Positions 3056–3467 (ANPPQEIALR…RIEGDTQIKL (412 aa)) are adenylation. Residues 3580–3660 (TQLTEAESEL…AMAAVIQDLS (81 aa)) enclose the Carrier 2 domain. Residue Ser-3620 is modified to O-(pantetheine 4'-phosphoryl)serine. The Thioester reductase (TE) domain occupies 3701 to 3920 (ITGATGFLGK…VDLISVERAA (220 aa)). Disordered stretches follow at residues 4031–4110 (RRDK…DEQI) and 4163–4194 (KGEY…EPDD). Residues 4057-4072 (RGRDVSPRHPALDHPD) are compositionally biased toward basic and acidic residues. Residues 4174-4183 (EEAEEAEWQC) are compositionally biased toward acidic residues. The span at 4184–4194 (DEGHGDGEPDD) shows a compositional bias: basic and acidic residues.

In the C-terminal section; belongs to the NRP synthetase family. The cofactor is pantetheine 4'-phosphate.

It participates in mycotoxin biosynthesis. Hybrid PKS-NRPS synthetase; part of the gene cluster that mediates the biosynthesis of pyrrocidines, fungal natural products containing a macrocyclic para-cyclophane connected to a decahydrofluorene ring system that show potent antibiotic activities toward Gram-negative bacteria. Within the pathway, the PKS-NRPS pydA, with the help of the trans-enoyl reductase pydC, synthesize the polyketide-tyrosyl acyl thioester product which can be reductively off-loaded by the terminal reductase (R) domain in pydA. The PKS module of pydA acts in combination with the trans-acting enoyl reductase pydC to produce a methylated polyketide attached to the ACP domain. In parallel, the adenylation (A) domain of the NRPS module activated L-tyrosine, which is then transferred to the ACP domain. The condensation (C) domain subsequently link this group to the polyketide chain, forming an enzyme-bound amide. The alpha/beta hydrolase pydG is then required to catalyze the subsequent Knoevenagel condensation that affords the 3-pyrrolin-2-one ring, whereas the four proteins pydB, pydE, pydX and pydZ then function synergistically to form the cyclophane. PydB and the membrane-bound pydX and pydZ are lipid-binding proteins that can sequester and mold the pdyG product into the inverse S-shape. Binding of the medium chain reductase pydE to the complex would trigger the cascade oxidative cyclization. PydY is involved in the Diels-Alder cycloaddition that forms the decahydrofluorene core. Additional non-enzymatic hydroxylation yields pyrrocidine A2 which can be further reduced into pyrrocidine B by an endogenous reductase. The sequence is that of Hybrid PKS-NRPS synthetase pydA from Acremonium sp.